The following is a 331-amino-acid chain: Ribosomal large subunit pseudouridine synthase D (331 aa).

One can recognise an S4 RNA-binding domain in the interval 25–97; sequence RRFDAVLAEL…IPLDILYEDE (73 aa). The active site involves aspartate 145.

The protein belongs to the pseudouridine synthase RluA family.

Its subcellular location is the cytoplasm. It catalyses the reaction uridine(1911/1915/1917) in 23S rRNA = pseudouridine(1911/1915/1917) in 23S rRNA. Responsible for synthesis of pseudouridine from uracil at positions 1911, 1915 and 1917 in 23S ribosomal RNA. The polypeptide is Ribosomal large subunit pseudouridine synthase D (rluD) (Xylella fastidiosa (strain Temecula1 / ATCC 700964)).